The sequence spans 37 residues: L-amino-acid oxidase (37 aa).

The protein belongs to the flavin monoamine oxidase family. FIG1 subfamily. As to quaternary structure, homodimer; non-covalently linked. Requires FAD as cofactor. N-Glycosylated. In terms of tissue distribution, expressed by the venom gland.

It localises to the secreted. It catalyses the reaction an L-alpha-amino acid + O2 + H2O = a 2-oxocarboxylate + H2O2 + NH4(+). The enzyme catalyses L-leucine + O2 + H2O = 4-methyl-2-oxopentanoate + H2O2 + NH4(+). The catalysed reaction is L-phenylalanine + O2 + H2O = 3-phenylpyruvate + H2O2 + NH4(+). It carries out the reaction L-tryptophan + O2 + H2O = indole-3-pyruvate + H2O2 + NH4(+). It catalyses the reaction L-methionine + O2 + H2O = 4-methylsulfanyl-2-oxobutanoate + H2O2 + NH4(+). The enzyme catalyses L-isoleucine + O2 + H2O = (S)-3-methyl-2-oxopentanoate + H2O2 + NH4(+). The catalysed reaction is L-arginine + O2 + H2O = 5-guanidino-2-oxopentanoate + H2O2 + NH4(+). It carries out the reaction L-histidine + O2 + H2O = 3-(imidazol-5-yl)pyruvate + H2O2 + NH4(+). It catalyses the reaction L-valine + O2 + H2O = 3-methyl-2-oxobutanoate + H2O2 + NH4(+). Functionally, catalyzes an oxidative deamination of predominantly hydrophobic and aromatic L-amino acids, thus producing hydrogen peroxide that may contribute to the diverse toxic effects of this enzyme. Is highly active on L-Leu, L-Met, moderately active on L-Arg, L-Trp, L-Phe, L-Val, L-His, and L-Ile, and is weakly or not active on L-Cys, L-Lys, L-Ala, L-Thr, L-Asp, L-Ser, and L-Pro. Exhibits diverse biological activities, such as hemorrhage, edema, apoptosis of vascular endothelial cells or tumor cell lines, as well as regulation of platelet aggregation. Effects of snake L-amino oxidases on platelets are controversial, since they either induce aggregation or inhibit agonist-induced aggregation. These different effects are probably due to different experimental conditions. This protein induce hemolysis and has antibacterial and antiparasitic activities (against the Gram-positive S.aureus). Tested in vivo, this protein significantly inhibits Ehrlich ascite tumors growth and induces an influx of polymorphonuclear cells, as well as spontaneous liberation of hydrogen peroxide from peritoneal macrophages. The protein is L-amino-acid oxidase of Bothrops jararaca (Jararaca).